A 216-amino-acid polypeptide reads, in one-letter code: Ras-related protein RABA1c (216 aa).

20–27 (GDSGVGKS) serves as a coordination point for GTP. The Effector region motif lies at 42–50 (SKSTIGVEF). Residues 68-72 (DTAGQ), 126-129 (NKSD), and 156-157 (SA) each bind GTP. S-geranylgeranyl cysteine attachment occurs at residues C213 and C214.

Belongs to the small GTPase superfamily. Rab family.

It localises to the cell membrane. Functionally, intracellular vesicle trafficking and protein transport. The sequence is that of Ras-related protein RABA1c (RABA1C) from Arabidopsis thaliana (Mouse-ear cress).